A 92-amino-acid polypeptide reads, in one-letter code: Large ribosomal subunit protein bL27 (92 aa).

Residues 1–26 (MAHKKGASSSSNGRDSESKRLGVKRF) are disordered.

Belongs to the bacterial ribosomal protein bL27 family.

This is Large ribosomal subunit protein bL27 from Corynebacterium aurimucosum (strain ATCC 700975 / DSM 44827 / CIP 107346 / CN-1) (Corynebacterium nigricans).